Consider the following 206-residue polypeptide: Large ribosomal subunit protein eL13x (206 aa).

The interval 186-206 (NARHAGARAKRAAEAEKEEKK) is disordered. Residues 196 to 206 (RAAEAEKEEKK) show a composition bias toward basic and acidic residues.

This sequence belongs to the eukaryotic ribosomal protein eL13 family.

This is Large ribosomal subunit protein eL13x (RPL13D) from Arabidopsis thaliana (Mouse-ear cress).